The sequence spans 266 residues: Glutamate racemase (266 aa).

Substrate-binding positions include 9 to 10 (DS) and 41 to 42 (YG). The active-site Proton donor/acceptor is the C72. 73–74 (NT) contacts substrate. The Proton donor/acceptor role is filled by C184. 185-186 (TH) contacts substrate.

It belongs to the aspartate/glutamate racemases family.

The enzyme catalyses L-glutamate = D-glutamate. The protein operates within cell wall biogenesis; peptidoglycan biosynthesis. Provides the (R)-glutamate required for cell wall biosynthesis. This is Glutamate racemase from Staphylococcus haemolyticus (strain JCSC1435).